We begin with the raw amino-acid sequence, 765 residues long: AMP deaminase 3 (765 aa).

Phosphoserine is present on residues Ser85 and Ser106. Zn(2+)-binding residues include His315 and His317. Substrate-binding positions include His317 and 386–391 (KFNSKY). His584 provides a ligand contact to Zn(2+). Residue Glu587 coordinates substrate. The active-site Proton acceptor is the His606. Position 661 (Asp661) interacts with Zn(2+). 662 to 665 (DPMQ) contributes to the substrate binding site.

The protein belongs to the metallo-dependent hydrolases superfamily. Adenosine and AMP deaminases family. As to quaternary structure, homotetramer. It depends on Zn(2+) as a cofactor. Expressed in adult tissues such as aorta, heart, kidney, lung, muscle and thyroid. Weakly expressed in thyroid and not detected in liver.

It carries out the reaction AMP + H2O + H(+) = IMP + NH4(+). It participates in purine metabolism; IMP biosynthesis via salvage pathway; IMP from AMP: step 1/1. AMP deaminase plays a critical role in energy metabolism. This is AMP deaminase 3 from Rattus norvegicus (Rat).